Reading from the N-terminus, the 246-residue chain is NAD-dependent protein deacylase (246 aa).

Positions 1–246 (MDLSQARAAL…RGLELLLEDD (246 aa)) constitute a Deacetylase sirtuin-type domain. 21–41 (GAGISAESGIPTFRDAQTGHW) is an NAD(+) binding site. Substrate contacts are provided by Tyr-66 and Arg-69. 101-104 (QNVD) is an NAD(+) binding site. Catalysis depends on His-123, which acts as the Proton acceptor. NAD(+)-binding positions include 191 to 193 (GTS), 217 to 219 (NPE), and Ala-235.

Belongs to the sirtuin family. Class III subfamily.

Its subcellular location is the cytoplasm. The catalysed reaction is N(6)-acetyl-L-lysyl-[protein] + NAD(+) + H2O = 2''-O-acetyl-ADP-D-ribose + nicotinamide + L-lysyl-[protein]. It carries out the reaction N(6)-succinyl-L-lysyl-[protein] + NAD(+) + H2O = 2''-O-succinyl-ADP-D-ribose + nicotinamide + L-lysyl-[protein]. Its function is as follows. NAD-dependent lysine deacetylase and desuccinylase that specifically removes acetyl and succinyl groups on target proteins. Modulates the activities of several proteins which are inactive in their acylated form. This is NAD-dependent protein deacylase from Deinococcus radiodurans (strain ATCC 13939 / DSM 20539 / JCM 16871 / CCUG 27074 / LMG 4051 / NBRC 15346 / NCIMB 9279 / VKM B-1422 / R1).